We begin with the raw amino-acid sequence, 294 residues long: GTP cyclohydrolase FolE2 (294 aa).

It belongs to the GTP cyclohydrolase IV family.

The catalysed reaction is GTP + H2O = 7,8-dihydroneopterin 3'-triphosphate + formate + H(+). It functions in the pathway cofactor biosynthesis; 7,8-dihydroneopterin triphosphate biosynthesis; 7,8-dihydroneopterin triphosphate from GTP: step 1/1. Converts GTP to 7,8-dihydroneopterin triphosphate. This is GTP cyclohydrolase FolE2 from Acinetobacter baylyi (strain ATCC 33305 / BD413 / ADP1).